The sequence spans 498 residues: Glycerol kinase (498 aa).

An ADP-binding site is contributed by T13. 3 residues coordinate ATP: T13, T14, and S15. Position 13 (T13) interacts with sn-glycerol 3-phosphate. R17 serves as a coordination point for ADP. Positions 83, 84, 135, and 244 each coordinate sn-glycerol 3-phosphate. Glycerol is bound by residues R83, E84, Y135, D244, and Q245. ADP is bound by residues T266 and G309. Residues T266, G309, Q313, and G410 each contribute to the ATP site. ADP-binding residues include G410 and N414.

This sequence belongs to the FGGY kinase family. In terms of assembly, homotetramer and homodimer (in equilibrium).

The enzyme catalyses glycerol + ATP = sn-glycerol 3-phosphate + ADP + H(+). Its pathway is polyol metabolism; glycerol degradation via glycerol kinase pathway; sn-glycerol 3-phosphate from glycerol: step 1/1. With respect to regulation, activated by phosphorylation and inhibited by fructose 1,6-bisphosphate (FBP). Key enzyme in the regulation of glycerol uptake and metabolism. Catalyzes the phosphorylation of glycerol to yield sn-glycerol 3-phosphate. In Symbiobacterium thermophilum (strain DSM 24528 / JCM 14929 / IAM 14863 / T), this protein is Glycerol kinase.